A 302-amino-acid chain; its full sequence is uncharacterized protein (302 aa).

Its function is as follows. May be a membrane-bound protein, possibly involved in IAA or IAA-Lysine transport. This is an uncharacterized protein from Pseudomonas savastanoi (Pseudomonas syringae pv. savastanoi).